Consider the following 416-residue polypeptide: Adenylosuccinate synthetase (416 aa).

Residues 13–19 and 41–43 contribute to the GTP site; these read GDEGKGK and GHT. The Proton acceptor role is filled by Asp14. 2 residues coordinate Mg(2+): Asp14 and Gly41. IMP contacts are provided by residues 14-17, 39-42, Thr126, Arg140, Gln220, Thr235, and Arg299; these read DEGK and NAGH. Residue His42 is the Proton donor of the active site. 295 to 301 contacts substrate; it reads TTTGRKR. GTP is bound by residues Arg301, 327-329, and 405-407; these read KLD and STS.

It belongs to the adenylosuccinate synthetase family. As to quaternary structure, homodimer. Mg(2+) is required as a cofactor.

Its subcellular location is the cytoplasm. The enzyme catalyses IMP + L-aspartate + GTP = N(6)-(1,2-dicarboxyethyl)-AMP + GDP + phosphate + 2 H(+). Its pathway is purine metabolism; AMP biosynthesis via de novo pathway; AMP from IMP: step 1/2. In terms of biological role, plays an important role in the de novo pathway of purine nucleotide biosynthesis. Catalyzes the first committed step in the biosynthesis of AMP from IMP. This is Adenylosuccinate synthetase from Campylobacter hominis (strain ATCC BAA-381 / DSM 21671 / CCUG 45161 / LMG 19568 / NCTC 13146 / CH001A).